A 180-amino-acid chain; its full sequence is Dephospho-CoA kinase (180 aa).

The DPCK domain maps to Val2–Glu180. ATP is bound at residue Gly10 to Thr15.

Belongs to the CoaE family.

The protein resides in the cytoplasm. It carries out the reaction 3'-dephospho-CoA + ATP = ADP + CoA + H(+). The protein operates within cofactor biosynthesis; coenzyme A biosynthesis; CoA from (R)-pantothenate: step 5/5. In terms of biological role, catalyzes the phosphorylation of the 3'-hydroxyl group of dephosphocoenzyme A to form coenzyme A. This Thermotoga maritima (strain ATCC 43589 / DSM 3109 / JCM 10099 / NBRC 100826 / MSB8) protein is Dephospho-CoA kinase.